We begin with the raw amino-acid sequence, 210 residues long: Cytidylate kinase (210 aa).

Residue 9–17 (GPAAAGKGT) coordinates ATP.

The protein belongs to the cytidylate kinase family. Type 1 subfamily.

It localises to the cytoplasm. The catalysed reaction is CMP + ATP = CDP + ADP. The enzyme catalyses dCMP + ATP = dCDP + ADP. The chain is Cytidylate kinase from Agrobacterium fabrum (strain C58 / ATCC 33970) (Agrobacterium tumefaciens (strain C58)).